Reading from the N-terminus, the 127-residue chain is Ribosome-binding factor A (127 aa).

Belongs to the RbfA family. As to quaternary structure, monomer. Binds 30S ribosomal subunits, but not 50S ribosomal subunits or 70S ribosomes.

The protein resides in the cytoplasm. In terms of biological role, one of several proteins that assist in the late maturation steps of the functional core of the 30S ribosomal subunit. Associates with free 30S ribosomal subunits (but not with 30S subunits that are part of 70S ribosomes or polysomes). Required for efficient processing of 16S rRNA. May interact with the 5'-terminal helix region of 16S rRNA. In Nitrosococcus oceani (strain ATCC 19707 / BCRC 17464 / JCM 30415 / NCIMB 11848 / C-107), this protein is Ribosome-binding factor A.